The chain runs to 515 residues: Recombining binding protein suppressor of hairless-like protein (515 aa).

The disordered stretch occupies residues 1-40; it reads MDPRETTDPSLPPGPLTHLSLPDSSEVRLQSDGPSLLGSW. 3 DNA-binding regions span residues 76–86, 191–196, and 218–223; these read QKSYGNEKRFF, SKPSQK, and RLRSQT. One can recognise an IPT/TIG domain in the interval 384 to 474; that stretch reads PLISTLELSG…YPSPFSFTYT (91 aa).

The protein belongs to the Su(H) family. Interacts weakly with EBNA2. Does not interact with any Notch proteins. As to expression, highly expressed in lung. Also detected in spleen, and brain.

The protein resides in the nucleus. Its function is as follows. Putative transcription factor, which cooperates with EBNA2 to activate transcription. This chain is Recombining binding protein suppressor of hairless-like protein (Rbpjl), found in Mus musculus (Mouse).